The sequence spans 108 residues: UPF0166 protein MJ1524 (108 aa).

The protein belongs to the UPF0166 family.

This chain is UPF0166 protein MJ1524, found in Methanocaldococcus jannaschii (strain ATCC 43067 / DSM 2661 / JAL-1 / JCM 10045 / NBRC 100440) (Methanococcus jannaschii).